A 200-amino-acid polypeptide reads, in one-letter code: Probable DNA-directed RNA polymerase subunit delta (200 aa).

The HTH HARE-type domain maps to 19–88 (LSMIEVARAI…GDNKWGLRSW (70 aa)). 2 stretches are compositionally biased toward acidic residues: residues 125-143 (DSDA…DAYE) and 150-200 (YDDE…TSEE). A disordered region spans residues 125-200 (DSDAIDYNAD…SDDDAETSEE (76 aa)).

This sequence belongs to the RpoE family. As to quaternary structure, RNAP is composed of a core of 2 alpha, a beta and a beta' subunits. The core is associated with a delta subunit and one of several sigma factors.

Its function is as follows. Participates in both the initiation and recycling phases of transcription. In the presence of the delta subunit, RNAP displays an increased specificity of transcription, a decreased affinity for nucleic acids, and an increased efficiency of RNA synthesis because of enhanced recycling. The chain is Probable DNA-directed RNA polymerase subunit delta from Streptococcus pneumoniae serotype 4 (strain ATCC BAA-334 / TIGR4).